The sequence spans 245 residues: 1-(5-phosphoribosyl)-5-[(5-phosphoribosylamino)methylideneamino] imidazole-4-carboxamide isomerase (245 aa).

D7 (proton acceptor) is an active-site residue. D129 (proton donor) is an active-site residue.

Belongs to the HisA/HisF family.

Its subcellular location is the cytoplasm. The enzyme catalyses 1-(5-phospho-beta-D-ribosyl)-5-[(5-phospho-beta-D-ribosylamino)methylideneamino]imidazole-4-carboxamide = 5-[(5-phospho-1-deoxy-D-ribulos-1-ylimino)methylamino]-1-(5-phospho-beta-D-ribosyl)imidazole-4-carboxamide. It participates in amino-acid biosynthesis; L-histidine biosynthesis; L-histidine from 5-phospho-alpha-D-ribose 1-diphosphate: step 4/9. The chain is 1-(5-phosphoribosyl)-5-[(5-phosphoribosylamino)methylideneamino] imidazole-4-carboxamide isomerase from Escherichia coli (strain ATCC 8739 / DSM 1576 / NBRC 3972 / NCIMB 8545 / WDCM 00012 / Crooks).